A 427-amino-acid polypeptide reads, in one-letter code: UPF0229 protein YeaH (427 aa).

The segment at 84-110 is disordered; it reads QSDRIERPQGGGGGSGSGQGQASQDGE. Gly residues predominate over residues 92-102; it reads QGGGGGSGSGQ.

It belongs to the UPF0229 family.

This Escherichia fergusonii (strain ATCC 35469 / DSM 13698 / CCUG 18766 / IAM 14443 / JCM 21226 / LMG 7866 / NBRC 102419 / NCTC 12128 / CDC 0568-73) protein is UPF0229 protein YeaH.